A 249-amino-acid polypeptide reads, in one-letter code: Small ribosomal subunit protein uS3 (249 aa).

Residues 39-107 (VRAMLKKRLY…EVHLNIVEIR (69 aa)) enclose the KH type-2 domain. Residues 215–249 (LDKRLATESGPAGEGGGRERGDRPDRGDRGRRDRG) form a disordered region. Positions 230–249 (GGRERGDRPDRGDRGRRDRG) are enriched in basic and acidic residues.

This sequence belongs to the universal ribosomal protein uS3 family. Part of the 30S ribosomal subunit. Forms a tight complex with proteins S10 and S14.

Binds the lower part of the 30S subunit head. Binds mRNA in the 70S ribosome, positioning it for translation. The polypeptide is Small ribosomal subunit protein uS3 (Caulobacter sp. (strain K31)).